Reading from the N-terminus, the 476-residue chain is Ribosomal protein uS12 methylthiotransferase RimO (476 aa).

Residues 33–143 (NRIGFVSLGC…VLKHVHKYVP (111 aa)) enclose the MTTase N-terminal domain. Positions 42, 78, 107, 175, 179, and 182 each coordinate [4Fe-4S] cluster. In terms of domain architecture, Radical SAM core spans 161–398 (LTPKHYAYLK…MEVQAEISAE (238 aa)). Positions 401-467 (ARFVGRTMDI…EHDLWAELVD (67 aa)) constitute a TRAM domain.

It belongs to the methylthiotransferase family. RimO subfamily. Requires [4Fe-4S] cluster as cofactor.

It localises to the cytoplasm. It catalyses the reaction L-aspartate(89)-[ribosomal protein uS12]-hydrogen + (sulfur carrier)-SH + AH2 + 2 S-adenosyl-L-methionine = 3-methylsulfanyl-L-aspartate(89)-[ribosomal protein uS12]-hydrogen + (sulfur carrier)-H + 5'-deoxyadenosine + L-methionine + A + S-adenosyl-L-homocysteine + 2 H(+). Its function is as follows. Catalyzes the methylthiolation of an aspartic acid residue of ribosomal protein uS12. This chain is Ribosomal protein uS12 methylthiotransferase RimO, found in Shewanella sp. (strain MR-4).